A 287-amino-acid polypeptide reads, in one-letter code: ATP synthase gamma chain (287 aa).

Belongs to the ATPase gamma chain family. In terms of assembly, F-type ATPases have 2 components, CF(1) - the catalytic core - and CF(0) - the membrane proton channel. CF(1) has five subunits: alpha(3), beta(3), gamma(1), delta(1), epsilon(1). CF(0) has three main subunits: a, b and c.

The protein localises to the cell inner membrane. Its function is as follows. Produces ATP from ADP in the presence of a proton gradient across the membrane. The gamma chain is believed to be important in regulating ATPase activity and the flow of protons through the CF(0) complex. The protein is ATP synthase gamma chain of Klebsiella pneumoniae (strain 342).